Here is a 154-residue protein sequence, read N- to C-terminus: Protein E6 (154 aa).

Zinc fingers lie at residues 30-66 (CIFC…CVKC) and 103-139 (CCKC…CLHC).

The protein belongs to the papillomaviridae E6 protein family. Forms homodimers. Interacts with ubiquitin-protein ligase UBE3A/E6-AP; this interaction stimulates UBE3A ubiquitin activity. Interacts with host TP53 and EP300; this interaction inhibits TP53 activity.

The protein localises to the host cytoplasm. It is found in the host nucleus. Its function is as follows. Plays a major role in the induction and maintenance of cellular transformation. E6 associates with host UBE3A/E6-AP ubiquitin-protein ligase and modulates its activity. Sequesters tumor suppressor TP53 in the host cytoplasm and modulates its activity by interacting with host EP300 that results in the reduction of TP53 acetylation and activation. In turn, apoptosis induced by DNA damage is inhibited. E6 also protects host keratinocytes from apoptosis by mediating the degradation of host BAK1. May also inhibit host immune response. The chain is Protein E6 from Human papillomavirus 7.